Consider the following 333-residue polypeptide: Glutamyl-tRNA reductase (333 aa).

Residues 60–63 (TCHR), serine 110, 115–117 (ETE), and glutamine 121 each bind substrate. Cysteine 61 (nucleophile) is an active-site residue. 189–194 (GYSEIN) lines the NADP(+) pocket.

Belongs to the glutamyl-tRNA reductase family. Homodimer.

It catalyses the reaction (S)-4-amino-5-oxopentanoate + tRNA(Glu) + NADP(+) = L-glutamyl-tRNA(Glu) + NADPH + H(+). Its pathway is porphyrin-containing compound metabolism; protoporphyrin-IX biosynthesis; 5-aminolevulinate from L-glutamyl-tRNA(Glu): step 1/2. Its function is as follows. Catalyzes the NADPH-dependent reduction of glutamyl-tRNA(Glu) to glutamate 1-semialdehyde (GSA). The polypeptide is Glutamyl-tRNA reductase (Chlamydia muridarum (strain MoPn / Nigg)).